Consider the following 585-residue polypeptide: MNIFADFSDRIINAVKALELKPKEGGELDLSRVAVEPPRDPSHGDIATNAAMVLSKAVGENPRALGERLAAALAEDPDVAEASVAGPGFVNLRLGNGFWHARLGEMLLLAGDYGRSKMGNGHKVNVEYVSANPTGPMHVGHCRGAVVGDALSNLLAFAGYDVTREYYINDAGAQIDVLGRSVLMRYREALGEDIGQIPEGLYPGDYLKPVGKALADEYGTKLLERPAEEALKIAKDTAIDAMMAMIREDLAALNVHHDVFFSERSLHAGNGGTIRSAINDLTLKGHVYKGKLPPPKGQVLEDWEDREQTLFRSTDVGDDIDRPLIKSDGTFTYFAADVAYMKDKYSRGFEHLIYVLGADHGGYVKRLEALARAISEGKLHLTVLLCQLVKLFRNGEPVRMSKRAGEFVTLRDVIDEVGRDAVRFMMLYRKSDAPLDFDFAKVTEQSKDNPVFYVQYASARCHSVFRQASEQLNVRKFDREAMKAALHRLDDPGEIALIRKLAEYPRLIESAAQALEPHRLAFYLYELANQFHVQWNRGSETDRLRFVKVNDPELTHARLGLVQAVCDVVRSGLALVGADAPEEMR.

Residues 131–141 carry the 'HIGH' region motif; that stretch reads ANPTGPMHVGH.

The protein belongs to the class-I aminoacyl-tRNA synthetase family. Monomer.

The protein localises to the cytoplasm. It catalyses the reaction tRNA(Arg) + L-arginine + ATP = L-arginyl-tRNA(Arg) + AMP + diphosphate. This chain is Arginine--tRNA ligase, found in Chelativorans sp. (strain BNC1).